The sequence spans 559 residues: ADP,ATP carrier protein 1 (559 aa).

Residues 1 to 10 (MNEVENNNHS) are compositionally biased toward polar residues. Residues 1–22 (MNEVENNNHSFPREDIPTEDEI) form a disordered region. N-linked (GlcNAc...) asparagine glycosylation occurs at Asn8. The next 4 helical transmembrane spans lie at 46–66 (FALL…MRIL), 79–99 (TILF…VFLI), 111–131 (IFSI…AVFL), and 174–194 (IVFI…FLSF). Asn196 is a glycosylation site (N-linked (GlcNAc...) asparagine). 2 helical membrane passes run 210 to 230 (PLII…GAFF) and 242 to 262 (QVLL…VIFL). N-linked (GlcNAc...) asparagine glycosylation is present at Asn290. The next 3 helical transmembrane spans lie at 305–325 (LLLA…MVES), 354–373 (QYMT…SSYV), and 377–397 (GFLL…VLFL). Residue Asn403 is glycosylated (N-linked (GlcNAc...) asparagine). The next 3 membrane-spanning stretches (helical) occupy residues 425–447 (YVLE…YSAF), 473–493 (IFGK…FEAL), and 503–523 (PITA…IIYL).

Belongs to the ADP/ATP translocase tlc family.

It localises to the cell membrane. ATP transporter involved in the uptake of ATP from the host cell cytoplasm. Provides the microsporidian cell with host ATP in exchange for ADP. This is an obligate exchange system. This energy acquiring activity is an important component of microsporidian parasitism. This chain is ADP,ATP carrier protein 1 (NTT1), found in Encephalitozoon cuniculi (strain GB-M1) (Microsporidian parasite).